The chain runs to 191 residues: Acireductone dioxygenase 2 (191 aa).

Fe(2+) is bound by residues His102, His104, Glu108, and His146. Residues His102, His104, Glu108, and His146 each contribute to the Ni(2+) site.

The protein belongs to the acireductone dioxygenase (ARD) family. In terms of assembly, monomer. Fe(2+) is required as a cofactor. The cofactor is Ni(2+).

The enzyme catalyses 1,2-dihydroxy-5-(methylsulfanyl)pent-1-en-3-one + O2 = 3-(methylsulfanyl)propanoate + CO + formate + 2 H(+). It carries out the reaction 1,2-dihydroxy-5-(methylsulfanyl)pent-1-en-3-one + O2 = 4-methylsulfanyl-2-oxobutanoate + formate + 2 H(+). It functions in the pathway amino-acid biosynthesis; L-methionine biosynthesis via salvage pathway; L-methionine from S-methyl-5-thio-alpha-D-ribose 1-phosphate: step 5/6. Its function is as follows. Catalyzes 2 different reactions between oxygen and the acireductone 1,2-dihydroxy-3-keto-5-methylthiopentene (DHK-MTPene) depending upon the metal bound in the active site. Fe-containing acireductone dioxygenase (Fe-ARD) produces formate and 2-keto-4-methylthiobutyrate (KMTB), the alpha-ketoacid precursor of methionine in the methionine recycle pathway. Ni-containing acireductone dioxygenase (Ni-ARD) produces methylthiopropionate, carbon monoxide and formate, and does not lie on the methionine recycle pathway. The sequence is that of Acireductone dioxygenase 2 from Nocardia farcinica (strain IFM 10152).